A 387-amino-acid chain; its full sequence is Sialic acid-binding Ig-like lectin 13 (387 aa).

An N-terminal signal peptide occupies residues 1 to 15 (MLPLLLPLLWAGALA). One can recognise an Ig-like V-type domain in the interval 16 to 138 (LEGIFQLEVP…KDPPLSVHVT (123 aa)). Residues 16–341 (LEGIFQLEVP…QRKSGPMAEV (326 aa)) lie on the Extracellular side of the membrane. 3 disulfides stabilise this stretch: Cys35-Cys168, Cys40-Cys100, and Cys162-Cys211. A glycan (N-linked (GlcNAc...) asparagine) is linked at Asn99. Arg118 is an N-acetylneuraminate binding site. Positions 144 to 227 (PDILIPGALK…AGVTTTRTVR (84 aa)) constitute an Ig-like C2-type 1 domain. N-linked (GlcNAc...) asparagine glycans are attached at residues Asn229, Asn236, and Asn254. The region spanning 234 to 326 (PQNLTLTVFQ…RNPLGSQQVS (93 aa)) is the Ig-like C2-type 2 domain. Cys270 and Cys314 are oxidised to a cystine. Residues 342 to 362 (VLVAIGEAAVKILLLFLCLII) form a helical membrane-spanning segment. Over 363 to 387 (LRVKSHRRKAAKAATGVEAAKVVKG) the chain is Cytoplasmic.

This sequence belongs to the immunoglobulin superfamily. SIGLEC (sialic acid binding Ig-like lectin) family.

The protein localises to the membrane. Its function is as follows. Putative adhesion molecule that mediates sialic-acid dependent binding to cells. This chain is Sialic acid-binding Ig-like lectin 13 (SIGLEC13), found in Pan troglodytes (Chimpanzee).